The primary structure comprises 70 residues: uncharacterized protein (70 aa).

2 helical membrane-spanning segments follow: residues 19–39 and 40–60; these read VIAL…VVGL and LFKL…VRKF.

Its subcellular location is the cell membrane. This is an uncharacterized protein from Streptomyces coelicolor (strain ATCC BAA-471 / A3(2) / M145).